We begin with the raw amino-acid sequence, 190 residues long: Small ribosomal subunit protein eS7 (190 aa).

It belongs to the eukaryotic ribosomal protein eS7 family.

This chain is Small ribosomal subunit protein eS7 (RPS7), found in Avicennia marina (Grey mangrove).